The primary structure comprises 96 residues: MKCFAQIVVLLLVIAFSHGAVITGVCDRDAQCGSGTCCAASAFSRNIRFCVPLGNNGEECHPASHKVPYNGKRLSSLCPCNTGLTCSKSGEKFQCS.

Positions 1–19 are cleaved as a signal peptide; sequence MKCFAQIVVLLLVIAFSHG. 5 disulfides stabilise this stretch: Cys-26–Cys-38, Cys-32–Cys-50, Cys-37–Cys-78, Cys-60–Cys-86, and Cys-80–Cys-95.

It belongs to the AVIT (prokineticin) family. As to expression, expressed by the skin glands.

It localises to the secreted. Its function is as follows. Potent agonist for both PKR1/PROKR1 and PKR2/PROKR2, and inducer of a potent and long-lasting hyperalgesia. Also potentiates capsaicin-induced TRPV1 current, when tested on DRG neurons. At subnanomolar concentrations, this protein both induces potent chemotaxis of macrophages and stimulates LPS-induced production of the pro-inflammatory cytokines IL-1 and IL-12. In vivo, potently stimulates the contraction of the guinea-pig gastrointestinal (GI) smooth muscle (nanomolar concentration). This chain is Prokineticin Bm8-a, found in Bombina maxima (Giant fire-bellied toad).